The primary structure comprises 237 residues: 2-C-methyl-D-erythritol 4-phosphate cytidylyltransferase (237 aa).

Belongs to the IspD/TarI cytidylyltransferase family. IspD subfamily.

The catalysed reaction is 2-C-methyl-D-erythritol 4-phosphate + CTP + H(+) = 4-CDP-2-C-methyl-D-erythritol + diphosphate. Its pathway is isoprenoid biosynthesis; isopentenyl diphosphate biosynthesis via DXP pathway; isopentenyl diphosphate from 1-deoxy-D-xylulose 5-phosphate: step 2/6. In terms of biological role, catalyzes the formation of 4-diphosphocytidyl-2-C-methyl-D-erythritol from CTP and 2-C-methyl-D-erythritol 4-phosphate (MEP). In Vibrio vulnificus (strain CMCP6), this protein is 2-C-methyl-D-erythritol 4-phosphate cytidylyltransferase.